An 864-amino-acid polypeptide reads, in one-letter code: Probable M1 family aminopeptidase 2 (864 aa).

Residues glutamate 149 and 289–293 each bind substrate; that span reads GAMEN. Histidine 325 serves as a coordination point for Zn(2+). The Proton acceptor role is filled by glutamate 326. Residues histidine 329 and glutamate 348 each contribute to the Zn(2+) site.

It belongs to the peptidase M1 family. Zn(2+) is required as a cofactor.

The protein is Probable M1 family aminopeptidase 2 of Encephalitozoon cuniculi (strain GB-M1) (Microsporidian parasite).